Consider the following 249-residue polypeptide: Ribosomal RNA small subunit methyltransferase J (249 aa).

S-adenosyl-L-methionine contacts are provided by residues 97–98, 113–114, and Asp167; these read RD and ER.

Belongs to the methyltransferase superfamily. RsmJ family.

It localises to the cytoplasm. It carries out the reaction guanosine(1516) in 16S rRNA + S-adenosyl-L-methionine = N(2)-methylguanosine(1516) in 16S rRNA + S-adenosyl-L-homocysteine + H(+). Its function is as follows. Specifically methylates the guanosine in position 1516 of 16S rRNA. This Aeromonas salmonicida (strain A449) protein is Ribosomal RNA small subunit methyltransferase J.